The chain runs to 147 residues: Ribonuclease P protein component (147 aa).

The disordered stretch occupies residues 117–147; the sequence is TRPRGQSSHRTRASREATSAHTTAVGEQPTQ.

Belongs to the RnpA family. As to quaternary structure, consists of a catalytic RNA component (M1 or rnpB) and a protein subunit.

It catalyses the reaction Endonucleolytic cleavage of RNA, removing 5'-extranucleotides from tRNA precursor.. Functionally, RNaseP catalyzes the removal of the 5'-leader sequence from pre-tRNA to produce the mature 5'-terminus. It can also cleave other RNA substrates such as 4.5S RNA. The protein component plays an auxiliary but essential role in vivo by binding to the 5'-leader sequence and broadening the substrate specificity of the ribozyme. In Thermobifida fusca (strain YX), this protein is Ribonuclease P protein component.